Consider the following 188-residue polypeptide: Acireductone dioxygenase (188 aa).

Positions 97, 99, 103, and 141 each coordinate Fe(2+). The Ni(2+) site is built by His-97, His-99, Glu-103, and His-141.

The protein belongs to the acireductone dioxygenase (ARD) family. As to quaternary structure, monomer. The cofactor is Fe(2+). Requires Ni(2+) as cofactor.

It catalyses the reaction 1,2-dihydroxy-5-(methylsulfanyl)pent-1-en-3-one + O2 = 3-(methylsulfanyl)propanoate + CO + formate + 2 H(+). It carries out the reaction 1,2-dihydroxy-5-(methylsulfanyl)pent-1-en-3-one + O2 = 4-methylsulfanyl-2-oxobutanoate + formate + 2 H(+). Its pathway is amino-acid biosynthesis; L-methionine biosynthesis via salvage pathway; L-methionine from S-methyl-5-thio-alpha-D-ribose 1-phosphate: step 5/6. In terms of biological role, catalyzes 2 different reactions between oxygen and the acireductone 1,2-dihydroxy-3-keto-5-methylthiopentene (DHK-MTPene) depending upon the metal bound in the active site. Fe-containing acireductone dioxygenase (Fe-ARD) produces formate and 2-keto-4-methylthiobutyrate (KMTB), the alpha-ketoacid precursor of methionine in the methionine recycle pathway. Ni-containing acireductone dioxygenase (Ni-ARD) produces methylthiopropionate, carbon monoxide and formate, and does not lie on the methionine recycle pathway. This is Acireductone dioxygenase from Xylella fastidiosa (strain M23).